A 264-amino-acid polypeptide reads, in one-letter code: tRNA (guanine-N(1)-)-methyltransferase (264 aa).

S-adenosyl-L-methionine-binding positions include Gly116 and 136–141 (VGDFVL).

This sequence belongs to the RNA methyltransferase TrmD family. As to quaternary structure, homodimer.

It is found in the cytoplasm. The catalysed reaction is guanosine(37) in tRNA + S-adenosyl-L-methionine = N(1)-methylguanosine(37) in tRNA + S-adenosyl-L-homocysteine + H(+). In terms of biological role, specifically methylates guanosine-37 in various tRNAs. This is tRNA (guanine-N(1)-)-methyltransferase from Koribacter versatilis (strain Ellin345).